A 530-amino-acid polypeptide reads, in one-letter code: Ubiquitin carboxyl-terminal hydrolase 17 (530 aa).

A USP domain is found at 80 to 375 (AGLQNMGNTC…QAYVLFYIQK (296 aa)). The active-site Nucleophile is the Cys89. His334 acts as the Proton acceptor in catalysis. Basic and acidic residues-rich tracts occupy residues 382 to 392 (SESVSRGREPR) and 398 to 413 (DTDRRATQGELKRDHP). 2 disordered regions span residues 382–416 (SESVSRGREPRALGAEDTDRRATQGELKRDHPCLQ) and 490–530 (SSTT…LVCQ). Residues 399 to 530 (TDRRATQGEL…HSKRALLVCQ (132 aa)) form a mediates interaction with SUDS3 region. Positions 498–510 (ESVNTGTLASLQG) are enriched in polar residues. Residues 511–524 (RTRRSKGKNKHSKR) show a composition bias toward basic residues.

This sequence belongs to the peptidase C19 family. USP17 subfamily. In terms of assembly, interacts with SUDS3; the interaction is direct. As to expression, broadly expressed.

It localises to the nucleus. It is found in the endoplasmic reticulum. The enzyme catalyses Thiol-dependent hydrolysis of ester, thioester, amide, peptide and isopeptide bonds formed by the C-terminal Gly of ubiquitin (a 76-residue protein attached to proteins as an intracellular targeting signal).. In terms of biological role, deubiquitinating enzyme that removes conjugated ubiquitin from specific proteins to regulate different cellular processes. Regulates cell proliferation by deubiquitinating and inhibiting RCE1 thereby controlling the small GTPases NRAS and HRAS localization and activation. In parallel, mediates deubiquitination of CDC25A, preventing CDC25A degradation by the proteasome during the G1/S and G2/M phases promoting cell-cycle progression. Also regulates cell proliferation and apoptosis through deubiquitination of SUDS3 a regulator of histone deacetylation. Through activation of the Rho family GTPases RAC1A, CDC42 and RHOA, regulates cell migration. Through the cleavage of 'Lys-48'- and 'Lys-63'-linked polyubiquitin chains of the cytoplasmic innate immune receptors RIGI and IFIH1 stimulates the cellular response to viral infection. The chain is Ubiquitin carboxyl-terminal hydrolase 17 (USP17L2) from Homo sapiens (Human).